We begin with the raw amino-acid sequence, 240 residues long: Ubiquinone biosynthesis O-methyltransferase (240 aa).

Residues R44, G64, D85, and M129 each contribute to the S-adenosyl-L-methionine site.

Belongs to the methyltransferase superfamily. UbiG/COQ3 family.

It catalyses the reaction a 3-demethylubiquinol + S-adenosyl-L-methionine = a ubiquinol + S-adenosyl-L-homocysteine + H(+). The catalysed reaction is a 3-(all-trans-polyprenyl)benzene-1,2-diol + S-adenosyl-L-methionine = a 2-methoxy-6-(all-trans-polyprenyl)phenol + S-adenosyl-L-homocysteine + H(+). It participates in cofactor biosynthesis; ubiquinone biosynthesis. Functionally, O-methyltransferase that catalyzes the 2 O-methylation steps in the ubiquinone biosynthetic pathway. The sequence is that of Ubiquinone biosynthesis O-methyltransferase from Escherichia coli O8 (strain IAI1).